Reading from the N-terminus, the 801-residue chain is MWTTGRMSNAKSWLGLGTSLYFWALMDLATTVLSSTPMPEVELDTLFSGKPQSHQRSRRSWVWNQFFVLEEYTGTDPLYVGKLHSDMDRGDGSIKYILSGEGAGIVFTIDDTTGDIHAIQRLDREERAQYTLRAQALDRRTGRPMEPESEFIIKIQDINDNEPKFLDGPYVATVPEMSPVGTSVIQVTATDADDPTYGNSARVVYSILQGQPYFSVDSKTGIIRTALMNMDREAKEYYEVIIQAKDMGGQLGGLAGTTTVNITLSDVNDNPPRFPQKHYQMSVLESAPVSSTVGRVFAKDLDEGINAEMKYTIVDGDGADAFDINTDPNFQVGIITVKKPLSFESKKSYTLKVEGSNPHVEMRFLNLGPFQDTTTVHIIVEDVDEPPVFEPRFYFVEVPEDVTIGTTIQIISAKDPDMTNNSIRYSIDRGSDPGRFFYVDITTGALMTARPLDREEFSWHNITVLAMEMNNPSQVGSVAATIKVLDVNDNAPEFPRFYEAFICENAKAGQLIQTVSAVDQDDPHNGQHFYYSLAPEAANNPNFTVRDNQDNTARILTRRSGFRQQEQSVFYLPILIADSGQPVLSSTGTLTIQVCSCSDDGHVMSCSPEAYMLPVSLSRGALIAILACVFVLLVLVLLILSMRRHRKQPYIIDDDENIHENIVRYDDEGGGEEDTEAFDIAAMWNPREAQAGAAPKTRQDMLPEIESLSRYVPQTCAVSSTVHSYVLAKLYEADMDLWAPPFDSLQTYMFEGDGSVAGSLSSLQSATSDSEQSFDFLTDWGPRFRKLAELYGASEGPSPLW.

An N-terminal signal peptide occupies residues 1 to 34; that stretch reads MWTTGRMSNAKSWLGLGTSLYFWALMDLATTVLS. Residues 35–59 constitute a propeptide that is removed on maturation; that stretch reads STPMPEVELDTLFSGKPQSHQRSRR. Over 60-619 the chain is Extracellular; sequence SWVWNQFFVL…AYMLPVSLSR (560 aa). 5 consecutive Cadherin domains span residues 61-165, 166-274, 275-389, 390-494, and 494-610; these read WVWN…EPKF, LDGP…PPRF, PQKH…PPVF, EPRF…APEF, and FPRF…SPEA. A glycan (N-linked (GlcNAc...) asparagine) is linked at Asn-261. 3 N-linked (GlcNAc...) asparagine glycosylation sites follow: Asn-420, Asn-461, and Asn-542. A helical transmembrane segment spans residues 620–640; that stretch reads GALIAILACVFVLLVLVLLIL. Over 641–801 the chain is Cytoplasmic; that stretch reads SMRRHRKQPY…GASEGPSPLW (161 aa).

The protein localises to the cell membrane. In terms of biological role, cadherins are calcium-dependent cell adhesion proteins. They preferentially interact with themselves in a homophilic manner in connecting cells; cadherins may thus contribute to the sorting of heterogeneous cell types. In Rattus norvegicus (Rat), this protein is Cadherin-20 (Cdh20).